A 534-amino-acid polypeptide reads, in one-letter code: Probable cytochrome c oxidase subunit 1 (534 aa).

8 consecutive transmembrane segments (helical) span residues 35-55 (IMYI…SLLF), 76-96 (VLIT…ALFS), 97-117 (GFGN…FPRL), 120-140 (ISFW…FIDG), 165-185 (VAIF…INLI), 202-222 (PLFV…MPVL), 254-274 (LFWF…FGIV), and 286-306 (IFGY…GFIV). A Fe(II)-heme a-binding site is contributed by H81. Residues H260 and Y264 each coordinate Cu cation. Positions 260 to 264 (HPEVY) form a cross-link, 1'-histidyl-3'-tyrosine (His-Tyr). Cu cation-binding residues include H309 and H310. The next 2 membrane-spanning stretches (helical) occupy residues 320–340 (ALIY…IKIF) and 357–377 (MLFA…GIIL). Residue H395 coordinates heme a3. The next 3 helical transmembrane spans lie at 396–416 (FHYT…YYWF), 433–453 (FWIT…LGLA), and 475–495 (IGAG…FYTL). Residue H397 coordinates Fe(II)-heme a.

It belongs to the heme-copper respiratory oxidase family.

Its subcellular location is the cell membrane. It carries out the reaction 4 Fe(II)-[cytochrome c] + O2 + 8 H(+)(in) = 4 Fe(III)-[cytochrome c] + 2 H2O + 4 H(+)(out). The protein operates within energy metabolism; oxidative phosphorylation. Functionally, cytochrome c oxidase is the component of the respiratory chain that catalyzes the reduction of oxygen to water. Subunits 1-3 form the functional core of the enzyme complex. CO I is the catalytic subunit of the enzyme. Electrons originating in cytochrome c are transferred via the copper A center of subunit 2 and heme A of subunit 1 to the bimetallic center formed by heme A3 and copper B. In Rickettsia prowazekii (strain Madrid E), this protein is Probable cytochrome c oxidase subunit 1 (ctaD).